A 213-amino-acid chain; its full sequence is Proteasome subunit beta (213 aa).

Residues 1–11 (MPEQYQESMTG) constitute a propeptide, removed in mature form; by autocatalysis. Catalysis depends on T12, which acts as the Nucleophile.

The protein belongs to the peptidase T1B family. In terms of assembly, the 20S proteasome core is composed of 14 alpha and 14 beta subunits that assemble into four stacked heptameric rings, resulting in a barrel-shaped structure. The two inner rings, each composed of seven catalytic beta subunits, are sandwiched by two outer rings, each composed of seven alpha subunits. The catalytic chamber with the active sites is on the inside of the barrel. Has a gated structure, the ends of the cylinder being occluded by the N-termini of the alpha-subunits. Is capped at one or both ends by the proteasome regulatory ATPase, PAN.

The protein localises to the cytoplasm. The enzyme catalyses Cleavage of peptide bonds with very broad specificity.. Its activity is regulated as follows. The formation of the proteasomal ATPase PAN-20S proteasome complex, via the docking of the C-termini of PAN into the intersubunit pockets in the alpha-rings, triggers opening of the gate for substrate entry. Interconversion between the open-gate and close-gate conformations leads to a dynamic regulation of the 20S proteasome proteolysis activity. Component of the proteasome core, a large protease complex with broad specificity involved in protein degradation. The chain is Proteasome subunit beta from Methanoregula boonei (strain DSM 21154 / JCM 14090 / 6A8).